The following is a 380-amino-acid chain: Erythronate-4-phosphate dehydrogenase (380 aa).

Substrate contacts are provided by Ser-45 and Thr-66. NAD(+) contacts are provided by Asp-146 and Thr-174. Residue Arg-207 is part of the active site. Position 231 (Asp-231) interacts with NAD(+). The active site involves Glu-236. The active-site Proton donor is the His-253. Gly-256 is an NAD(+) binding site. Tyr-257 is a substrate binding site.

The protein belongs to the D-isomer specific 2-hydroxyacid dehydrogenase family. PdxB subfamily. Homodimer.

The protein resides in the cytoplasm. It catalyses the reaction 4-phospho-D-erythronate + NAD(+) = (R)-3-hydroxy-2-oxo-4-phosphooxybutanoate + NADH + H(+). The protein operates within cofactor biosynthesis; pyridoxine 5'-phosphate biosynthesis; pyridoxine 5'-phosphate from D-erythrose 4-phosphate: step 2/5. Functionally, catalyzes the oxidation of erythronate-4-phosphate to 3-hydroxy-2-oxo-4-phosphonooxybutanoate. The polypeptide is Erythronate-4-phosphate dehydrogenase (Pseudomonas fluorescens (strain Pf0-1)).